A 388-amino-acid chain; its full sequence is Succinate--CoA ligase [ADP-forming] subunit beta (388 aa).

The ATP-grasp domain maps to 9–244 (KQLFAEFGLP…PSQEDEREAH (236 aa)). Residues K46, 53 to 55 (GRG), E99, S102, and E107 each bind ATP. Mg(2+) is bound by residues N199 and D213. Residues N264 and 321-323 (GIV) each bind substrate.

This sequence belongs to the succinate/malate CoA ligase beta subunit family. In terms of assembly, heterotetramer of two alpha and two beta subunits. The cofactor is Mg(2+).

The enzyme catalyses succinate + ATP + CoA = succinyl-CoA + ADP + phosphate. It catalyses the reaction GTP + succinate + CoA = succinyl-CoA + GDP + phosphate. The protein operates within carbohydrate metabolism; tricarboxylic acid cycle; succinate from succinyl-CoA (ligase route): step 1/1. Functionally, succinyl-CoA synthetase functions in the citric acid cycle (TCA), coupling the hydrolysis of succinyl-CoA to the synthesis of either ATP or GTP and thus represents the only step of substrate-level phosphorylation in the TCA. The beta subunit provides nucleotide specificity of the enzyme and binds the substrate succinate, while the binding sites for coenzyme A and phosphate are found in the alpha subunit. This chain is Succinate--CoA ligase [ADP-forming] subunit beta, found in Vibrio atlanticus (strain LGP32) (Vibrio splendidus (strain Mel32)).